We begin with the raw amino-acid sequence, 491 residues long: Glycogen synthase 1 (491 aa).

Lysine 15 contacts ADP-alpha-D-glucose.

Belongs to the glycosyltransferase 1 family. Bacterial/plant glycogen synthase subfamily.

The enzyme catalyses [(1-&gt;4)-alpha-D-glucosyl](n) + ADP-alpha-D-glucose = [(1-&gt;4)-alpha-D-glucosyl](n+1) + ADP + H(+). The protein operates within glycan biosynthesis; glycogen biosynthesis. Functionally, synthesizes alpha-1,4-glucan chains using ADP-glucose. This is Glycogen synthase 1 from Synechococcus sp. (strain JA-2-3B'a(2-13)) (Cyanobacteria bacterium Yellowstone B-Prime).